The sequence spans 376 residues: Protein-tyrosine sulfotransferase 2 (376 aa).

Over 1–8 (MRLSVRKV) the chain is Cytoplasmic. The chain crosses the membrane as a helical; Signal-anchor for type II membrane protein span at residues 9-25 (LLAAGCALALVLAVQLG). Residues 26–376 (QQVLECRAVL…NSTSPHLGSS (351 aa)) are Lumenal-facing. 77–81 (RSGTT) contributes to the 3'-phosphoadenylyl sulfate binding site. C95 and C155 are oxidised to a cystine. E98 functions as the Proton donor/acceptor in the catalytic mechanism. Residues 100–104 (RIIPR) form an interaction with peptide substrate region. Residues R182, S190, and R194 each contribute to the 3'-phosphoadenylyl sulfate site. A disulfide bridge links C224 with C232. 3'-phosphoadenylyl sulfate contacts are provided by residues Y237, 284–293 (STDQVIKPVN), and K299. 2 N-linked (GlcNAc...) asparagine glycosylation sites follow: N342 and N367.

Belongs to the protein sulfotransferase family. Homodimer. Can also form heterodimers with TPST1. In terms of processing, N-glycosylated. As to expression, widely expressed.

Its subcellular location is the golgi apparatus membrane. It carries out the reaction L-tyrosyl-[protein] + 3'-phosphoadenylyl sulfate = O-sulfo-L-tyrosine-[protein] + adenosine 3',5'-bisphosphate + H(+). Catalyzes the O-sulfation of tyrosine residues within acidic motifs of polypeptides, using 3'-phosphoadenylyl sulfate (PAPS) as cosubstrate. This is Protein-tyrosine sulfotransferase 2 (Tpst2) from Mus musculus (Mouse).